A 151-amino-acid polypeptide reads, in one-letter code: Large ribosomal subunit protein uL13 (151 aa).

It belongs to the universal ribosomal protein uL13 family. Part of the 50S ribosomal subunit.

Functionally, this protein is one of the early assembly proteins of the 50S ribosomal subunit, although it is not seen to bind rRNA by itself. It is important during the early stages of 50S assembly. In Microcystis aeruginosa (strain NIES-843 / IAM M-2473), this protein is Large ribosomal subunit protein uL13.